The following is a 447-amino-acid chain: Tubulin beta-1 chain (447 aa).

The GTP site is built by glutamine 11, glutamate 69, serine 138, glycine 142, threonine 143, glycine 144, asparagine 204, and asparagine 226. Residue glutamate 69 participates in Mg(2+) binding. Residues 411 to 427 (AESNMNDLVSEYQQYQD) are compositionally biased toward polar residues. The interval 411 to 447 (AESNMNDLVSEYQQYQDATADEEGDYEDEEEQVPEDE) is disordered. Over residues 429 to 447 (TADEEGDYEDEEEQVPEDE) the composition is skewed to acidic residues.

It belongs to the tubulin family. In terms of assembly, dimer of alpha and beta chains. A typical microtubule is a hollow water-filled tube with an outer diameter of 25 nm and an inner diameter of 15 nM. Alpha-beta heterodimers associate head-to-tail to form protofilaments running lengthwise along the microtubule wall with the beta-tubulin subunit facing the microtubule plus end conferring a structural polarity. Microtubules usually have 13 protofilaments but different protofilament numbers can be found in some organisms and specialized cells. It depends on Mg(2+) as a cofactor. Expressed in leaf sheaths.

It localises to the cytoplasm. Its subcellular location is the cytoskeleton. Its function is as follows. Tubulin is the major constituent of microtubules, a cylinder consisting of laterally associated linear protofilaments composed of alpha- and beta-tubulin heterodimers. Microtubules grow by the addition of GTP-tubulin dimers to the microtubule end, where a stabilizing cap forms. Below the cap, tubulin dimers are in GDP-bound state, owing to GTPase activity of alpha-tubulin. This is Tubulin beta-1 chain (TUBB1) from Oryza sativa subsp. japonica (Rice).